The chain runs to 347 residues: Dolichyl-diphosphooligosaccharide--protein glycosyltransferase subunit TUSC3 (347 aa).

The N-terminal stretch at 1–41 is a signal peptide; the sequence is MSARAAPSRRRQAGRRLRYLPTGSFPFLLLLLLLCIQLGGG. Residues 42–196 lie on the Lumenal side of the membrane; sequence QKKKENLLAE…DVHIRVFRPP (155 aa). Positions 59–187 constitute a Thioredoxin domain; it reads WSSRRSIFRM…LAKWIADRTD (129 aa). The N-linked (GlcNAc...) asparagine glycan is linked to N83. The cysteines at positions 99 and 102 are disulfide-linked. Residues 197–217 traverse the membrane as a helical segment; that stretch reads NYSGTIALALLVSLVGGLLYL. Residues 218–221 are Cytoplasmic-facing; the sequence is RRNN. A helical membrane pass occupies residues 222–242; sequence LEFIYNKTGWAMVSLCIVFAM. The Lumenal portion of the chain corresponds to 243 to 276; that stretch reads TSGQMWNHIRGPPYAHKNPHNGQVSYIHGSSQAQ. Residues 277 to 297 traverse the membrane as a helical segment; sequence FVAESHIILVLNAAITMGMVL. Over 298–312 the chain is Cytoplasmic; that stretch reads LNEAATSKGDVGKRR. Residues 313 to 333 form a helical membrane-spanning segment; sequence IICLVGLGLVVFFFSFLLSIF. The Lumenal portion of the chain corresponds to 334–347; the sequence is RSKYHGYPYSFLIK.

This sequence belongs to the OST3/OST6 family. As to quaternary structure, accessory component of the STT3B-containing form of the oligosaccharyltransferase (OST) complex. OST exists in two different complex forms which contain common core subunits RPN1, RPN2, OST48, OST4, DAD1 and TMEM258, either STT3A or STT3B as catalytic subunits, and form-specific accessory subunits. OST can form stable complexes with the Sec61 complex or with both the Sec61 and TRAP complexes. The association of TUSC3 or MAGT1 with the STT3B-containing complex seems to be mutually exclusvice.

It is found in the endoplasmic reticulum membrane. The protein operates within protein modification; protein glycosylation. Its function is as follows. Acts as accessory component of the N-oligosaccharyl transferase (OST) complex which catalyzes the transfer of a high mannose oligosaccharide from a lipid-linked oligosaccharide donor to an asparagine residue within an Asn-X-Ser/Thr consensus motif in nascent polypeptide chains. Involved in N-glycosylation of STT3B-dependent substrates. Specifically required for the glycosylation of a subset of acceptor sites that are near cysteine residues; in this function seems to act redundantly with MAGT1. In its oxidized form proposed to form transient mixed disulfides with a glycoprotein substrate to facilitate access of STT3B to the unmodified acceptor site. Also has oxidoreductase-independent functions in the STT3B-containing OST complex possibly involving substrate recognition. Could indirectly play a role in Mg(2+) transport. This chain is Dolichyl-diphosphooligosaccharide--protein glycosyltransferase subunit TUSC3 (Tusc3), found in Mus musculus (Mouse).